Reading from the N-terminus, the 504-residue chain is Patatin-like phospholipase domain-containing protein 2 (504 aa).

Over 1-8 (MFPREKTW) the chain is Cytoplasmic. Residues 9–29 (NISFAGCGFLGVYYVGVASCL) form a helical membrane-spanning segment. The 170-residue stretch at 10-179 (ISFAGCGFLG…SDNLPLYELK (170 aa)) folds into the PNPLA domain. The short motif at 14–19 (GCGFLG) is the GXGXXG element. The Extracellular portion of the chain corresponds to 30 to 42 (REHAPFLVANATH). Asn-39 is a glycosylation site (N-linked (GlcNAc...) asparagine). Residues 43 to 63 (IYGASAGALTATALVTGVCLG) traverse the membrane as a helical segment. Positions 45 to 49 (GASAG) match the GXSXG motif. The Nucleophile role is filled by Ser-47. Topologically, residues 64–137 (EAGAKFIEVS…IISHFNSKDE (74 aa)) are cytoplasmic. Lys-92 participates in a covalent cross-link: Glycyl lysine isopeptide (Lys-Gly) (interchain with G-Cter in ubiquitin). Residues 138–158 (LIQANVCSGFIPVYCGLIPPS) traverse the membrane as a helical segment. Residues 159 to 329 (LQGVRYVDGG…TTLSNMLPVR (171 aa)) are Extracellular-facing. Asp-166 (proton acceptor) is an active-site residue. The DGA/G motif lies at 166-168 (DGG). A helical transmembrane segment spans residues 330-350 (LATAMMVPYTLPLESALSFTI). Topologically, residues 351 to 504 (RLLEWLPDVP…ARPVIGALGL (154 aa)) are cytoplasmic. Residue Ser-372 is modified to Phosphoserine; in vitro. Position 404 is a phosphoserine; by PKA and FAM20C (Ser-404). Phosphoserine is present on Ser-428. The segment at 463–492 (APADPAPAPADPASPQHQLAGPAPLLSTPA) is disordered.

As to quaternary structure, interacts with ABHD5; this association stimulates PNPLA2 triglyceride hydrolase activity. Interacts with SERPINF1; this interaction stimulates the phospholipase A2 activity of PNPLA2. Despite a colocalization in lipid droplets, it probably does not interact with PLIN. Interacts with PLIN5; prevents interaction with ABHD5. Interacts with FAF2. Phosphorylation at Ser-404 by PKA is increased during fasting and moderate intensity exercise, and moderately increases lipolytic activity. Phosphorylation at Ser-404 is increased upon beta-adrenergic stimulation. Post-translationally, ubiquitinated by PEX2 in response to reactive oxygen species (ROS), leading to its degradation. Ubiquitination is stimulated by LDAH. In terms of tissue distribution, highest expression in adipose tissue. Also detected in heart, skeletal muscle, and portions of the gastrointestinal tract. Detected in normal retina and retinoblastoma cells. Detected in retinal pigment epithelium and, at lower intensity, in the inner segments of photoreceptors and in the ganglion cell layer of the neural retina (at protein level).

It localises to the lipid droplet. The protein localises to the cell membrane. Its subcellular location is the cytoplasm. It catalyses the reaction a triacylglycerol + H2O = a diacylglycerol + a fatty acid + H(+). The enzyme catalyses a triacylglycerol + H2O = a 1,2-diacylglycerol + a fatty acid + H(+). The catalysed reaction is a triacylglycerol + H2O = a 1,3-diacylglycerol + a fatty acid + H(+). It carries out the reaction a triacyl-sn-glycerol + H2O = a 1,3-diacyl-sn-glycerol + a fatty acid + H(+). It catalyses the reaction a triacyl-sn-glycerol + H2O = a 2,3-diacyl-sn-glycerol + a fatty acid + H(+). The enzyme catalyses a 1-acylglycerol + a 1,3-diacylglycerol = a triacylglycerol + glycerol. The catalysed reaction is a 1-acylglycerol + a 1,2-diacylglycerol = a triacylglycerol + glycerol. It carries out the reaction 2 a 1-acylglycerol = a 1,2-diacylglycerol + glycerol. It catalyses the reaction a triacylglycerol + all-trans-retinol = an all-trans-retinyl ester + a diacylglycerol. The enzyme catalyses 1,2-di-(9Z-octadecenoyl)-glycerol + (9Z)-octadecenoate + H(+) = 1,2,3-tri-(9Z-octadecenoyl)-glycerol + H2O. The catalysed reaction is 1,2,3-tri-(9Z-octadecenoyl)-glycerol + H2O = 1,3-di-(9Z-octadecenoyl)-glycerol + (9Z)-octadecenoate + H(+). It carries out the reaction 1-(9Z-octadecenoyl)-glycerol + 1,3-di-(9Z-octadecenoyl)-glycerol = 1,2,3-tri-(9Z-octadecenoyl)-glycerol + glycerol. It catalyses the reaction 1-(9Z-octadecenoyl)-glycerol + 1,2-di-(9Z-octadecenoyl)-glycerol = 1,2,3-tri-(9Z-octadecenoyl)-glycerol + glycerol. The enzyme catalyses 2 1-(9Z-octadecenoyl)-glycerol = 1,2-di-(9Z-octadecenoyl)-glycerol + glycerol. The catalysed reaction is 1,2,3-tri-(9Z-octadecenoyl)-glycerol + all-trans-retinol = all-trans-retinyl 9Z-octadecenoate + di-(9Z)-octadecenoylglycerol. It carries out the reaction 1,2,3-tri-(9Z)-hexadecenoylglycerol + H2O = 1,3-di-(9Z)-hexadecenoylglycerol + (9Z)-hexadecenoate + H(+). It catalyses the reaction 1,2,3-tri-(9Z,12Z)-octadecadienoylglycerol + H2O = 1,3-di-(9Z,12Z)-octadecadienoylglycerol + (9Z,12Z)-octadecadienoate + H(+). The enzyme catalyses 1,2,3-tri-(9Z,12Z,15Z)-octadecatrienoylglycerol + H2O = 1,3-di-(9Z,12Z,15Z)-octadecatrienoylglycerol + (9Z,12Z,15Z)-octadecatrienoate + H(+). The catalysed reaction is 1,3-di-(9Z)-octadecenoyl-2-hexadecanoylglycerol + H2O = 1,3-di-(9Z-octadecenoyl)-glycerol + hexadecanoate + H(+). It carries out the reaction 1,2-di-(9Z)-octadecenoyl-3-hexadecanoyl-sn-glycerol + H2O = 1-(9Z)-octadecenoyl-3-hexadecanoyl-sn-glycerol + (9Z)-octadecenoate + H(+). It catalyses the reaction 1-hexadecanoyl-2,3-di-(9Z)-octadecenoyl-sn-glycerol + H2O = 1-hexadecanoyl-3-(9Z)-octadecenoyl-sn-glycerol + (9Z)-octadecenoate + H(+). The enzyme catalyses 1,2,3-tri-(9Z-octadecenoyl)-glycerol + H2O = 2,3-di-(9Z)-octadecenoyl-sn-glycerol + (9Z)-octadecenoate + H(+). The catalysed reaction is 1,2,3-tri-(9Z)-hexadecenoylglycerol + H2O = 2,3-di-(9Z)-hexadecenoyl-sn-glycerol + (9Z)-hexadecenoate + H(+). It carries out the reaction 1,2,3-tri-(9Z,12Z)-octadecadienoylglycerol + H2O = 2,3-di-(9Z,12Z)-octadecadienoyl-sn-glycerol + (9Z,12Z)-octadecadienoate + H(+). It catalyses the reaction 1,2,3-tri-(9Z,12Z,15Z)-octadecatrienoylglycerol + H2O = 2,3-di-(9Z,12Z,15Z)-octadecatrienoyl-sn-glycerol + (9Z,12Z,15Z)-octadecatrienoate + H(+). The enzyme catalyses 1,3-di-(9Z)-octadecenoyl-2-hexadecanoylglycerol + H2O = 2-hexadecanoyl-3-(9Z)-octadecenoyl-sn-glycerol + (9Z)-octadecenoate + H(+). The catalysed reaction is 1-hexadecanoyl-2,3-di-(9Z)-octadecenoyl-sn-glycerol + H2O = 2,3-di-(9Z)-octadecenoyl-sn-glycerol + hexadecanoate + H(+). It carries out the reaction 1,2-di-(9Z)-octadecenoyl-3-hexadecanoyl-sn-glycerol + H2O = 2-(9Z-octadecenoyl)-3-hexadecanoyl-sn-glycerol + (9Z)-octadecenoate + H(+). It catalyses the reaction a 1,2-diacyl-sn-glycero-3-phosphocholine + H2O = a 1-acyl-sn-glycero-3-phosphocholine + a fatty acid + H(+). The enzyme catalyses 1,2,3-tri-(9Z-octadecenoyl)-glycerol + 9-hydroxy-octadecanoate = 9-(9Z-octadecenoyloxy)-octadecanoate + 2,3-di-(9Z)-octadecenoyl-sn-glycerol. The catalysed reaction is 1-hexadecanoyl-2,3-di-(9Z)-octadecenoyl-sn-glycerol + 9-hydroxy-octadecanoate = 9-hexadecanoyloxy-octadecanoate + 2,3-di-(9Z)-octadecenoyl-sn-glycerol. It carries out the reaction 1,2,3-tri-(10Z)-heptadecenoylglycerol + 9-hydroxy-octadecanoate = 2,3-di-(10Z-heptadecenoyl)-sn-glycerol + 9-(10Z-heptadecenoyloxy)-octadecanoate. It catalyses the reaction 1,2,3-tri-(9Z,12Z)-octadecadienoylglycerol + 9-hydroxy-octadecanoate = 2,3-di-(9Z,12Z)-octadecadienoyl-sn-glycerol + 9-(9Z,12Z-octadecadienoyloxy)-octadecanoate. The enzyme catalyses 1,2,3-tri-(9Z)-hexadecenoylglycerol + 9-hydroxy-octadecanoate = 2,3-di-(9Z)-hexadecenoyl-sn-glycerol + 9-(9Z-hexadecenoyloxy)-octadecanoate. The catalysed reaction is 9-hydroxy-octadecanoate + 1,2-di-(9Z-octadecenoyl)-sn-glycerol = 9-(9Z-octadecenoyloxy)-octadecanoate + 2-(9Z-octadecenoyl)-glycerol. It carries out the reaction 1-hexadecanoyl-2,3-di-(9Z)-octadecenoyl-sn-glycerol + 9-hydroxy-octadecanoate = 1-hexadecanoyl-3-(9Z)-octadecenoyl-sn-glycerol + 9-(9Z-octadecenoyloxy)-octadecanoate. The protein operates within glycerolipid metabolism; triacylglycerol degradation. With respect to regulation, the triglyceride lipase activity is inhibited by BEL ((E)-6-(bromomethylene)-3-(1-naphthalenyl)-2H-tetrahydropyran-2-one), a suicide substrate inhibitor. No differences in the acylglycerol transacylase was detected in the presence or absence of ATP. Its function is as follows. Catalyzes the initial step in triglyceride hydrolysis in adipocyte and non-adipocyte lipid droplets. Exhibits a strong preference for the hydrolysis of long-chain fatty acid esters at the sn-2 position of the glycerol backbone and acts coordinately with LIPE/HLS and DGAT2 within the lipolytic cascade. Also possesses acylglycerol transacylase and phospholipase A2 activities. Transfers fatty acid from triglyceride to retinol, hydrolyzes retinylesters, and generates 1,3-diacylglycerol from triglycerides. Regulates adiposome size and may be involved in the degradation of adiposomes. Catalyzes the formation of an ester bond between hydroxy fatty acids and fatty acids derived from triglycerides or diglycerides to generate fatty acid esters of hydroxy fatty acids (FAHFAs) in adipocytes. Acts antagonistically with LDAH in regulation of cellular lipid stores. Inhibits LDAH-stimulated lipid droplet fusion. May play an important role in energy homeostasis. May play a role in the response of the organism to starvation, enhancing hydrolysis of triglycerides and providing free fatty acids to other tissues to be oxidized in situations of energy depletion. In Homo sapiens (Human), this protein is Patatin-like phospholipase domain-containing protein 2.